The following is a 275-amino-acid chain: NH(3)-dependent NAD(+) synthetase (275 aa).

Residue 46 to 53 coordinates ATP; that stretch reads GISGGQDS. Mg(2+) is bound at residue aspartate 52. A deamido-NAD(+)-binding site is contributed by arginine 140. Residue threonine 160 coordinates ATP. Glutamate 165 is a Mg(2+) binding site. Deamido-NAD(+) is bound by residues lysine 173 and aspartate 180. Lysine 189 and threonine 211 together coordinate ATP. Position 260–261 (260–261) interacts with deamido-NAD(+); that stretch reads HK.

This sequence belongs to the NAD synthetase family. As to quaternary structure, homodimer.

The catalysed reaction is deamido-NAD(+) + NH4(+) + ATP = AMP + diphosphate + NAD(+) + H(+). It participates in cofactor biosynthesis; NAD(+) biosynthesis; NAD(+) from deamido-NAD(+) (ammonia route): step 1/1. Catalyzes the ATP-dependent amidation of deamido-NAD to form NAD. Uses ammonia as a nitrogen source. This chain is NH(3)-dependent NAD(+) synthetase, found in Escherichia coli O127:H6 (strain E2348/69 / EPEC).